Here is a 219-residue protein sequence, read N- to C-terminus: Sugar fermentation stimulation protein homolog (219 aa).

It belongs to the SfsA family.

The chain is Sugar fermentation stimulation protein homolog from Archaeoglobus fulgidus (strain ATCC 49558 / DSM 4304 / JCM 9628 / NBRC 100126 / VC-16).